The primary structure comprises 84 residues: Small ribosomal subunit protein bS16 (84 aa).

The protein belongs to the bacterial ribosomal protein bS16 family.

The chain is Small ribosomal subunit protein bS16 from Dichelobacter nodosus (strain VCS1703A).